A 150-amino-acid chain; its full sequence is Large ribosomal subunit protein bL9 (150 aa).

It belongs to the bacterial ribosomal protein bL9 family.

Functionally, binds to the 23S rRNA. This is Large ribosomal subunit protein bL9 from Neisseria meningitidis serogroup C / serotype 2a (strain ATCC 700532 / DSM 15464 / FAM18).